Consider the following 403-residue polypeptide: Beta-galactoside alpha-2,6-sialyltransferase 1 (403 aa).

The Cytoplasmic portion of the chain corresponds to 1 to 9 (MIHTNLKRK). Residues 10–26 (FSCFVLVFLLFAIICVW) form a helical; Signal-anchor for type II membrane protein membrane-spanning segment. Residues 27 to 403 (KKGSDYEALT…TLSGFRNNRC (377 aa)) are Lumenal-facing. Cystine bridges form between Cys-139/Cys-403, Cys-181/Cys-332, and Cys-350/Cys-361. Residues Asn-146 and Asn-158 are each glycosylated (N-linked (GlcNAc...) asparagine). Substrate-binding positions include Ser-186, Asn-209, Asn-230, 319-321 (SSG), Cys-350, Tyr-351, Thr-362, Tyr-366, His-367, and Lys-373. Tyr-366 is modified (phosphotyrosine).

The protein belongs to the glycosyltransferase 29 family. In terms of assembly, monomer and homodimer. In terms of processing, N-glycosylated.

The protein localises to the golgi apparatus. It localises to the golgi stack membrane. The protein resides in the secreted. The enzyme catalyses a beta-D-galactoside + CMP-N-acetyl-beta-neuraminate = an N-acetyl-alpha-neuraminyl-(2-&gt;6)-beta-D-galactosyl derivative + CMP + H(+). It participates in protein modification; protein glycosylation. In terms of biological role, transfers sialic acid from CMP-sialic acid to galactose-containing acceptor substrates. This chain is Beta-galactoside alpha-2,6-sialyltransferase 1 (St6gal1), found in Mus musculus (Mouse).